Consider the following 324-residue polypeptide: 4-hydroxy-2-oxoglutarate aldolase, mitochondrial (324 aa).

The N-terminal 22 residues, 1–22 (MFAHRSFSLLCRRSAVTSWRSQ), are a transit peptide targeting the mitochondrion. Residue 74–75 (SN) participates in substrate binding. K193 functions as the Schiff-base intermediate with substrate in the catalytic mechanism. Substrate contacts are provided by S195 and G219.

The protein belongs to the DapA family. As to quaternary structure, homotetramer.

Its subcellular location is the mitochondrion. It catalyses the reaction (4S)-4-hydroxy-2-oxoglutarate = glyoxylate + pyruvate. The enzyme catalyses (4R)-4-hydroxy-2-oxoglutarate = glyoxylate + pyruvate. With respect to regulation, inhibited by divalent cations. Its function is as follows. Catalyzes the final step in the metabolic pathway of hydroxyproline. This is 4-hydroxy-2-oxoglutarate aldolase, mitochondrial from Danio rerio (Zebrafish).